A 913-amino-acid polypeptide reads, in one-letter code: DNA polymerase (913 aa).

Residues P182–P401 form a contains conserved residues essential for 3' -&gt; 5' exonuclease activities region.

Belongs to the DNA polymerase type-B family.

It carries out the reaction DNA(n) + a 2'-deoxyribonucleoside 5'-triphosphate = DNA(n+1) + diphosphate. Its function is as follows. In addition to polymerase activity, this DNA polymerase potentially exhibits 3' to 5' exonuclease activity. The protein is DNA polymerase (DPO) of Chlorella (PBCV-NY2A).